The following is a 399-amino-acid chain: Glutamyl-tRNA reductase (399 aa).

Substrate is bound by residues 45 to 48 (TCNR), S93, 98 to 100 (EDQ), and Q104. The active-site Nucleophile is C46. 173–178 (GAGKMG) contributes to the NADP(+) binding site.

Belongs to the glutamyl-tRNA reductase family. In terms of assembly, homodimer.

It carries out the reaction (S)-4-amino-5-oxopentanoate + tRNA(Glu) + NADP(+) = L-glutamyl-tRNA(Glu) + NADPH + H(+). It functions in the pathway porphyrin-containing compound metabolism; protoporphyrin-IX biosynthesis; 5-aminolevulinate from L-glutamyl-tRNA(Glu): step 1/2. Catalyzes the NADPH-dependent reduction of glutamyl-tRNA(Glu) to glutamate 1-semialdehyde (GSA). The sequence is that of Glutamyl-tRNA reductase from Methanobrevibacter smithii (strain ATCC 35061 / DSM 861 / OCM 144 / PS).